We begin with the raw amino-acid sequence, 396 residues long: S-adenosylmethionine synthase 2 (396 aa).

A Mg(2+)-binding site is contributed by glutamate 13. Histidine 19 contacts ATP. K(+) is bound at residue glutamate 47. L-methionine contacts are provided by glutamate 60 and glutamine 103. ATP contacts are provided by residues aspartate 171–lysine 173, serine 239–phenylalanine 242, aspartate 250, arginine 256–lysine 257, alanine 273, lysine 277, and lysine 281. Aspartate 250 contributes to the L-methionine binding site. L-methionine is bound at residue lysine 281.

This sequence belongs to the AdoMet synthase family. Homotetramer. Mn(2+) serves as cofactor. Mg(2+) is required as a cofactor. The cofactor is Co(2+). Requires K(+) as cofactor. As to expression, expressed in roots, stems and leaves (at protein level).

It is found in the cytoplasm. It catalyses the reaction L-methionine + ATP + H2O = S-adenosyl-L-methionine + phosphate + diphosphate. It functions in the pathway amino-acid biosynthesis; S-adenosyl-L-methionine biosynthesis; S-adenosyl-L-methionine from L-methionine: step 1/1. Functionally, catalyzes the formation of S-adenosylmethionine from methionine and ATP. The reaction comprises two steps that are both catalyzed by the same enzyme: formation of S-adenosylmethionine (AdoMet) and triphosphate, and subsequent hydrolysis of the triphosphate. May be involved in the synthesis of betain in response to abiotic stress such as high salinity. The polypeptide is S-adenosylmethionine synthase 2 (SAMS2) (Atriplex nummularia (Old man saltbush)).